We begin with the raw amino-acid sequence, 464 residues long: UDP-N-acetylmuramate--L-alanine ligase (464 aa).

G118–T124 serves as a coordination point for ATP.

Belongs to the MurCDEF family.

The protein resides in the cytoplasm. The enzyme catalyses UDP-N-acetyl-alpha-D-muramate + L-alanine + ATP = UDP-N-acetyl-alpha-D-muramoyl-L-alanine + ADP + phosphate + H(+). It participates in cell wall biogenesis; peptidoglycan biosynthesis. Functionally, cell wall formation. The chain is UDP-N-acetylmuramate--L-alanine ligase from Dinoroseobacter shibae (strain DSM 16493 / NCIMB 14021 / DFL 12).